A 250-amino-acid polypeptide reads, in one-letter code: Probable syntaxin-8B (250 aa).

At 1–213 (MGDYWLNEHD…NRRMETIKQN (213 aa)) the chain is on the cytoplasmic side. Positions 73-100 (EKELLRRKNKVESLISMKNQLNSTLDAA) form a coiled coil. The t-SNARE coiled-coil homology domain maps to 148–210 (QHIMREQDES…RNANRRMETI (63 aa)). The helical; Anchor for type IV membrane protein transmembrane segment at 214-234 (AGSTCMIVCIVILIILIVVLI) threads the bilayer. Residues 235–250 (ATDSGCKIYNDPKHCP) are Vesicular-facing.

Belongs to the syntaxin family.

The protein localises to the membrane. This chain is Probable syntaxin-8B (syn8B), found in Dictyostelium discoideum (Social amoeba).